Reading from the N-terminus, the 334-residue chain is N-acetyl-gamma-glutamyl-phosphate reductase (334 aa).

Residue C149 is part of the active site.

Belongs to the NAGSA dehydrogenase family. Type 1 subfamily.

It localises to the cytoplasm. It catalyses the reaction N-acetyl-L-glutamate 5-semialdehyde + phosphate + NADP(+) = N-acetyl-L-glutamyl 5-phosphate + NADPH + H(+). It functions in the pathway amino-acid biosynthesis; L-arginine biosynthesis; N(2)-acetyl-L-ornithine from L-glutamate: step 3/4. Functionally, catalyzes the NADPH-dependent reduction of N-acetyl-5-glutamyl phosphate to yield N-acetyl-L-glutamate 5-semialdehyde. This is N-acetyl-gamma-glutamyl-phosphate reductase from Sulfurimonas denitrificans (strain ATCC 33889 / DSM 1251) (Thiomicrospira denitrificans (strain ATCC 33889 / DSM 1251)).